The following is a 134-amino-acid chain: UPF0102 protein Dshi_2830 (134 aa).

The protein belongs to the UPF0102 family.

The polypeptide is UPF0102 protein Dshi_2830 (Dinoroseobacter shibae (strain DSM 16493 / NCIMB 14021 / DFL 12)).